The chain runs to 387 residues: Growth-regulating factor 3 (387 aa).

A QLQ domain is found at 53-88 (PFTAAQYEELEQQALIYKYLVAGVPVPADLLLPIRR). Short sequence motifs (bipartite nuclear localization signal) lie at residues 111–129 (KKLD…KKWR) and 147–154 (RGRNRSRK). The region spanning 114–158 (DPEPGRCRRTDGKKWRCSKEAAPDSKYCERHMHRGRNRSRKPVEA) is the WRC domain. The segment at 145–176 (MHRGRNRSRKPVEAQLVAPHSQPPATAPAAAV) is disordered.

It belongs to the GRF family.

The protein resides in the nucleus. In terms of biological role, transcription activator that plays a regulatory role in gibberellin-induced stem elongation. The protein is Growth-regulating factor 3 (GRF3) of Oryza sativa subsp. japonica (Rice).